A 974-amino-acid chain; its full sequence is Isoleucine--tRNA ligase (974 aa).

Positions 69-79 match the 'HIGH' region motif; the sequence is PYANGALHMGH. Glutamate 585 serves as a coordination point for L-isoleucyl-5'-AMP. Positions 626–630 match the 'KMSKS' region motif; that stretch reads KMSKS. Lysine 629 is an ATP binding site. 4 residues coordinate Zn(2+): cysteine 939, cysteine 942, cysteine 959, and cysteine 962.

The protein belongs to the class-I aminoacyl-tRNA synthetase family. IleS type 1 subfamily. Monomer. It depends on Zn(2+) as a cofactor.

It is found in the cytoplasm. It carries out the reaction tRNA(Ile) + L-isoleucine + ATP = L-isoleucyl-tRNA(Ile) + AMP + diphosphate. In terms of biological role, catalyzes the attachment of isoleucine to tRNA(Ile). As IleRS can inadvertently accommodate and process structurally similar amino acids such as valine, to avoid such errors it has two additional distinct tRNA(Ile)-dependent editing activities. One activity is designated as 'pretransfer' editing and involves the hydrolysis of activated Val-AMP. The other activity is designated 'posttransfer' editing and involves deacylation of mischarged Val-tRNA(Ile). This chain is Isoleucine--tRNA ligase, found in Parasynechococcus marenigrum (strain WH8102).